Here is a 501-residue protein sequence, read N- to C-terminus: Probable cytosol aminopeptidase (501 aa).

Positions 267 and 272 each coordinate Mn(2+). The active site involves Lys279. Mn(2+)-binding residues include Asp290, Asp349, and Glu351. The active site involves Arg353.

It belongs to the peptidase M17 family. Requires Mn(2+) as cofactor.

It is found in the cytoplasm. The enzyme catalyses Release of an N-terminal amino acid, Xaa-|-Yaa-, in which Xaa is preferably Leu, but may be other amino acids including Pro although not Arg or Lys, and Yaa may be Pro. Amino acid amides and methyl esters are also readily hydrolyzed, but rates on arylamides are exceedingly low.. It catalyses the reaction Release of an N-terminal amino acid, preferentially leucine, but not glutamic or aspartic acids.. In terms of biological role, presumably involved in the processing and regular turnover of intracellular proteins. Catalyzes the removal of unsubstituted N-terminal amino acids from various peptides. In Hamiltonella defensa subsp. Acyrthosiphon pisum (strain 5AT), this protein is Probable cytosol aminopeptidase.